The primary structure comprises 130 residues: Cytidine deaminase (130 aa).

A CMP/dCMP-type deaminase domain is found at 3-130 (VNLEWIIKQL…ELLMNGFKKS (128 aa)). Position 43–45 (43–45 (NIE)) interacts with substrate. Cys54 is a binding site for Zn(2+). Catalysis depends on Glu56, which acts as the Proton donor. Zn(2+) contacts are provided by Cys88 and Cys91.

Belongs to the cytidine and deoxycytidylate deaminase family. Homodimer. The cofactor is Zn(2+).

It carries out the reaction cytidine + H2O + H(+) = uridine + NH4(+). It catalyses the reaction 2'-deoxycytidine + H2O + H(+) = 2'-deoxyuridine + NH4(+). Its function is as follows. This enzyme scavenges exogenous and endogenous cytidine and 2'-deoxycytidine for UMP synthesis. This chain is Cytidine deaminase (cdd), found in Mycoplasma genitalium (strain ATCC 33530 / DSM 19775 / NCTC 10195 / G37) (Mycoplasmoides genitalium).